A 104-amino-acid chain; its full sequence is MAKQQIIRIRLKAFDHRLIDQSAREIVDTAKRTGAHVRGPIPLPTRKERFTILISPHVNKDARDQYEIRTHKRLMDIVDPTEKTVDALMKLDLAAGVDVQIKLT.

The protein belongs to the universal ribosomal protein uS10 family. Part of the 30S ribosomal subunit.

Involved in the binding of tRNA to the ribosomes. The polypeptide is Small ribosomal subunit protein uS10 (Nitrosococcus oceani (strain ATCC 19707 / BCRC 17464 / JCM 30415 / NCIMB 11848 / C-107)).